Reading from the N-terminus, the 325-residue chain is Olfactory receptor 1S2 (325 aa).

At 1–38 (MKTLCSFLQISRNMHQENQTTITEFILLGLSNQAEHQN) the chain is on the extracellular side. The N-linked (GlcNAc...) asparagine glycan is linked to Asn-18. Residues 39–62 (LLFVLFLSMYVVTVVGNGLIIVAI) traverse the membrane as a helical segment. The Cytoplasmic portion of the chain corresponds to 63–70 (SLDIYLHT). Residues 71-92 (PMYLFLAYLSFADISSISNSVP) traverse the membrane as a helical segment. At 93–113 (KMLVNIQTNSQSISYESCITQ) the chain is on the extracellular side. Cys-110 and Cys-202 form a disulfide bridge. A helical membrane pass occupies residues 114-133 (MYFSIVFVVTDNLLLGTMAF). The Cytoplasmic portion of the chain corresponds to 134 to 152 (DHFVAICHPLNYTTFMRAR). Residues 153–171 (FGTLLTVISWFLSNIIALT) form a helical membrane-spanning segment. Residues 172 to 208 (HTLLLIQLLFCDHNTLPHFFCDLAPLLKLSCSDTMIN) lie on the Extracellular side of the membrane. Residues 209–232 (ELVLFIVGLSVIIFPFVLIFFSYV) traverse the membrane as a helical segment. Residues 233 to 249 (CIIRAVLGVSSTQGKWK) are Cytoplasmic-facing. A helical transmembrane segment spans residues 250-272 (AFSTCGSHLTIALLFYGTTVGVY). Residues 273 to 285 (FFPSSTHPEDTDK) are Extracellular-facing. A helical transmembrane segment spans residues 286-305 (IGAVLFTVVTPMMNPFIYSL). Topologically, residues 306–325 (RNKDMKGALRKLINRKISSL) are cytoplasmic.

It belongs to the G-protein coupled receptor 1 family.

Its subcellular location is the cell membrane. Its function is as follows. Odorant receptor. The chain is Olfactory receptor 1S2 (OR1S2) from Homo sapiens (Human).